Reading from the N-terminus, the 404-residue chain is Glucose-1-phosphate adenylyltransferase 2 (404 aa).

Alpha-D-glucose 1-phosphate-binding positions include Tyr97, Gly162, 177–178 (EK), and Ser195.

The protein belongs to the bacterial/plant glucose-1-phosphate adenylyltransferase family. Homotetramer.

The enzyme catalyses alpha-D-glucose 1-phosphate + ATP + H(+) = ADP-alpha-D-glucose + diphosphate. It participates in glycan biosynthesis; glycogen biosynthesis. Functionally, involved in the biosynthesis of ADP-glucose, a building block required for the elongation reactions to produce glycogen. Catalyzes the reaction between ATP and alpha-D-glucose 1-phosphate (G1P) to produce pyrophosphate and ADP-Glc. This chain is Glucose-1-phosphate adenylyltransferase 2, found in Vibrio parahaemolyticus serotype O3:K6 (strain RIMD 2210633).